The primary structure comprises 143 residues: UPF0201 protein Msed_1787 (143 aa).

It belongs to the UPF0201 family.

The chain is UPF0201 protein Msed_1787 from Metallosphaera sedula (strain ATCC 51363 / DSM 5348 / JCM 9185 / NBRC 15509 / TH2).